Consider the following 245-residue polypeptide: MKWKEQAIILGARQYGETSVILEVVTRQHGRYMGVVKGGRSRRMAALLQPGNFVEAEWWARLDEHLGLFKLEALDLCASRLMFLPEALYGLQLMASHFRLLPERDPHPILYDILHLFMQNFDEQFVNAELLVRFEMRLLEELGFGLDLSHCAVTGRQEKLYYVSPKSGRAVCEEVGLPWKNKLLLLPKFLIERTNRPVDFDDIRNGFTLTDFFLTRHVWEPRGIKQPSVRAILIQLFERRFHTKA.

The protein belongs to the RecO family.

Functionally, involved in DNA repair and RecF pathway recombination. In Bartonella bacilliformis (strain ATCC 35685 / KC583 / Herrer 020/F12,63), this protein is DNA repair protein RecO.